Here is a 1461-residue protein sequence, read N- to C-terminus: Major viral transcription factor ICP4 homolog (1461 aa).

Disordered stretches follow at residues 25–60 (AAEE…GGLF), 75–518 (AAGA…SREG), 811–1002 (RPGP…PRPS), and 1395–1461 (AGGA…LLLR). Low complexity predominate over residues 75 to 90 (AAGATRPPRPPSAQQQ). Acidic residues predominate over residues 102-113 (VLDDEDEEEDEP). Composition is skewed to low complexity over residues 167-197 (RSSP…APRR) and 224-249 (PAAV…PVSA). The span at 250 to 260 (PGGGGAPSGGG) shows a compositional bias: gly residues. The span at 270–285 (REPLLDEPAAARRLDP) shows a compositional bias: basic and acidic residues. Composition is skewed to low complexity over residues 292–308 (SPVS…TTTV) and 353–405 (GFSS…SSSS). The segment covering 423-434 (GPPPSPPAPAAA) has biased composition (pro residues). Positions 435-453 (PRPSASSASATSSSAAASP) are enriched in low complexity. A compositionally biased stretch (pro residues) spans 814–826 (PAEPAPGLPPLWP). Residues 838–888 (PAAAGAPSGLPGSGPSSPASTKSGSSTKSSSGTKSGLSGSSGYASSPAAGP) are compositionally biased toward low complexity. Over residues 894 to 903 (RRKKKRRAPG) the composition is skewed to basic residues. The span at 944-965 (LGLGPAPDPAPALVSSSSSSSS) shows a compositional bias: low complexity.

This sequence belongs to the herpesviridae ICP4 family. Post-translationally, a long stretch of serine residues may be a major site of phosphorylation.

The protein localises to the host nucleus. Functionally, this IE protein is a multifunctional protein capable of migrating to the nucleus, binding to DNA, trans-activating other viral genes, and autoregulating its own synthesis. In Sus scrofa (Pig), this protein is Major viral transcription factor ICP4 homolog (IE).